Here is a 1631-residue protein sequence, read N- to C-terminus: ABC transporter A family member 6 (1631 aa).

A run of 7 helical transmembrane segments spans residues 25–45 (ICCE…ILAL), 242–262 (SVFI…DVVI), 285–305 (SWII…VVIF), 317–337 (GIVI…SFIF), 346–366 (FCGL…IFVS), 372–392 (VSVK…SIYI), and 416–436 (ILML…FEKV). Positions 491–724 (ISIRNLRKEF…FGQGYLLTCN (234 aa)) constitute an ABC transporter 1 domain. 527–534 (GPNGCGKS) contributes to the ATP binding site. Transmembrane regions (helical) follow at residues 866–886 (SFFL…ILYK), 1047–1067 (AIIY…GSFA), 1099–1119 (WDFF…AGVI), 1127–1147 (FGSF…LGYL), 1158–1178 (AVGA…IASL), 1198–1218 (IIDL…IVFI), and 1242–1262 (LGTP…WILL). Residues 1309–1544 (IQFKNLHKLF…FGAGYSIDVK (236 aa)) form the ABC transporter 2 domain. Residue 1347–1354 (GLNGGGKS) coordinates ATP.

This sequence belongs to the ABC transporter superfamily. ABCA family.

The protein localises to the membrane. The sequence is that of ABC transporter A family member 6 (abcA6) from Dictyostelium discoideum (Social amoeba).